A 157-amino-acid chain; its full sequence is Lipoprotein signal peptidase (157 aa).

Helical transmembrane passes span 10-30 (FIFIGVFLLIFGTDQAIKYAI), 36-56 (YESSIIDIVLVFNKGVAFSLL), 58-78 (FLEGSLKYLQILLILGLFIFL), and 84-104 (LFKAHTIEFGMVFGAGVSNIL). Residues aspartate 114 and aspartate 131 contribute to the active site. The helical transmembrane segment at 123–143 (DFAIFNFADVMIDVGVGVLLI) threads the bilayer.

It belongs to the peptidase A8 family.

Its subcellular location is the cell inner membrane. The catalysed reaction is Release of signal peptides from bacterial membrane prolipoproteins. Hydrolyzes -Xaa-Yaa-Zaa-|-(S,diacylglyceryl)Cys-, in which Xaa is hydrophobic (preferably Leu), and Yaa (Ala or Ser) and Zaa (Gly or Ala) have small, neutral side chains.. Its pathway is protein modification; lipoprotein biosynthesis (signal peptide cleavage). Functionally, this protein specifically catalyzes the removal of signal peptides from prolipoproteins. This Helicobacter acinonychis (strain Sheeba) protein is Lipoprotein signal peptidase.